The following is a 432-amino-acid chain: MKKTHITEQNFADLGLQPQVIDGLNAKGFIKCTPIQAKALPVLLAGQDIAGQAQTGTGKTLAFLTATFNHLLTTPAPEGRKITQPRAIIMAPTRELAIQIFNDAESLIASTGLKAALAYGGERYEKQQQVIEQGVDILIGTTGRIIDFYKQGHIDFKMIQAVVLDEADRMFDLGFIKDIRFIFRRMPAPTERLNMLFSATLSYRVQELAFEHMQEPEHVVVEPEQKTGHRIKEELFYPSNDHKMALLQTLIEEEWPDRAIIFANTKHKCESVWGHLAADKHRVGLLTGDVPQKKRERILEEFTQGNVDILVATDVAARGLHIPQVTHVFNFDLPNEAEDYVHRIGRTGRAGASGNSISFACEEYAINLPAIEEYIEHSIPQSDYDASALLEDLPAPLRLQRRPQQNRRNNNGQRQGGNRKHSRPRQPRNTQS.

A Q motif motif is present at residues 9 to 37 (QNFADLGLQPQVIDGLNAKGFIKCTPIQA). Residues 40 to 219 (LPVLLAGQDI…FEHMQEPEHV (180 aa)) enclose the Helicase ATP-binding domain. 53 to 60 (AQTGTGKT) is a binding site for ATP. The DEAD box motif lies at 165-168 (DEAD). The region spanning 245–390 (ALLQTLIEEE…QSDYDASALL (146 aa)) is the Helicase C-terminal domain. Residues 397-432 (LRLQRRPQQNRRNNNGQRQGGNRKHSRPRQPRNTQS) form a disordered region. Residues 417–426 (GNRKHSRPRQ) are compositionally biased toward basic residues.

Belongs to the DEAD box helicase family. RhlB subfamily. As to quaternary structure, component of the RNA degradosome, which is a multiprotein complex involved in RNA processing and mRNA degradation.

The protein localises to the cytoplasm. It carries out the reaction ATP + H2O = ADP + phosphate + H(+). DEAD-box RNA helicase involved in RNA degradation. Has RNA-dependent ATPase activity and unwinds double-stranded RNA. This is ATP-dependent RNA helicase RhlB from Aliivibrio fischeri (strain MJ11) (Vibrio fischeri).